We begin with the raw amino-acid sequence, 244 residues long: Cell division protein ZapD (244 aa).

It belongs to the ZapD family. Interacts with FtsZ.

Its subcellular location is the cytoplasm. Cell division factor that enhances FtsZ-ring assembly. Directly interacts with FtsZ and promotes bundling of FtsZ protofilaments, with a reduction in FtsZ GTPase activity. This Shewanella baltica (strain OS185) protein is Cell division protein ZapD.